The following is a 366-amino-acid chain: MAGPAWISKVSRLLGAFHNPKQVTRGFTGGVQTVTLIPGDGIGPEISAAVMKIFDAAKAPIQWEERNVTAIQGPGGKWMIPSEAKESMDKNKMGLKGPLKTPIAAGHPSMNLLLRKTFDLYANVRPCVSIEGYKTPYTDVNIVTIRENTEGEYSGIEHVIVDGVVQSIKLITEGASKRIAEFAFEYARNNHRSNVTAVHKANIMRMSDGLFLQKCREVAENCKDIKFNEMYLDTVCLNMVQDPSQFDVLVMPNLYGDILSDLCAGLIGGLGVTPSGNIGANGVAIFESVHGTAPDIAGKDMANPTALLLSAVMMLRHMGLFDHAARIEAACFATIKDGKSLTKDLGGNAKCSDFTEEICRRVKDLD.

The transit peptide at 1–27 directs the protein to the mitochondrion; sequence MAGPAWISKVSRLLGAFHNPKQVTRGF. Lysine 77 carries the N6-succinyllysine modification. Threonine 101 is subject to Phosphothreonine. 3 residues coordinate substrate: arginine 115, arginine 125, and arginine 146. Lysine 223 carries the post-translational modification N6-acetyllysine. Positions 233, 257, and 261 each coordinate Mg(2+). At lysine 343 the chain carries N6-acetyllysine; alternate. N6-succinyllysine; alternate is present on lysine 343. Position 350 is an N6-succinyllysine (lysine 350).

This sequence belongs to the isocitrate and isopropylmalate dehydrogenases family. Heterooligomer of subunits alpha (IDH3A), beta (IDH3B), and gamma (IDH3G) in the apparent ratio of 2:1:1. The heterodimer containing one IDH3A and one IDH3B subunit and the heterodimer containing one IDH3A and one IDH3G subunit assemble into a heterotetramer (which contains two subunits of IDH3A, one of IDH3B and one of IDH3G) and further into the heterooctamer. Mg(2+) serves as cofactor. Requires Mn(2+) as cofactor.

It localises to the mitochondrion. It catalyses the reaction D-threo-isocitrate + NAD(+) = 2-oxoglutarate + CO2 + NADH. With respect to regulation, the heterotetramer and the heterodimer composed of IDH3A and IDH3G subunits can be allosterically activated by citrate (CIT) or/and ADP, and the two activators can act independently or synergistically. The heterodimer composed of IDH3A and IDH3B subunits cannot be allosterically regulated and the allosteric regulation of the heterotetramer is through the IDH3G subunit and not the IDH3B subunit. The IDH3G subunit contains the allosteric site which consists of a CIT-binding site and an ADP-binding site, and the binding of CIT and ADP causes conformational changes at the allosteric site which are transmitted to the active site in the catalytic subunit (IDH3A) through a cascade of conformational changes at the heterodimer interface, leading to stabilization of the isocitrate-binding at the active site and thus activation of the enzyme. ATP can activate the heterotetramer and the heterodimer composed of IDH3A and IDH3G subunits at low concentrations but inhibits their activities at high concentrations, whereas ATP exhibits only inhibitory effect on the heterodimer composed of IDH3A and IDH3B subunits. Catalytic subunit of the enzyme which catalyzes the decarboxylation of isocitrate (ICT) into alpha-ketoglutarate. The heterodimer composed of the alpha (IDH3A) and beta (IDH3B) subunits and the heterodimer composed of the alpha (IDH3A) and gamma (IDH3G) subunits, have considerable basal activity but the full activity of the heterotetramer (containing two subunits of IDH3A, one of IDH3B and one of IDH3G) requires the assembly and cooperative function of both heterodimers. This chain is Isocitrate dehydrogenase [NAD] subunit alpha, mitochondrial, found in Pongo abelii (Sumatran orangutan).